The sequence spans 339 residues: NADH-quinone oxidoreductase subunit H (339 aa).

The next 8 helical transmembrane spans lie at L19 to A39, F87 to F107, L120 to A140, S153 to M173, F191 to V211, I253 to F273, P275 to F295, and L310 to M330.

This sequence belongs to the complex I subunit 1 family. As to quaternary structure, NDH-1 is composed of 14 different subunits. Subunits NuoA, H, J, K, L, M, N constitute the membrane sector of the complex.

Its subcellular location is the cell inner membrane. The enzyme catalyses a quinone + NADH + 5 H(+)(in) = a quinol + NAD(+) + 4 H(+)(out). Its function is as follows. NDH-1 shuttles electrons from NADH, via FMN and iron-sulfur (Fe-S) centers, to quinones in the respiratory chain. The immediate electron acceptor for the enzyme in this species is believed to be ubiquinone. Couples the redox reaction to proton translocation (for every two electrons transferred, four hydrogen ions are translocated across the cytoplasmic membrane), and thus conserves the redox energy in a proton gradient. This subunit may bind ubiquinone. The sequence is that of NADH-quinone oxidoreductase subunit H from Methylobacillus flagellatus (strain ATCC 51484 / DSM 6875 / VKM B-1610 / KT).